A 179-amino-acid polypeptide reads, in one-letter code: SCAN domain-containing protein 1 (179 aa).

The tract at residues 1 to 107 (MAATEPILAT…AGSRLGPETF (107 aa)) is disordered. Over residues 52–80 (SPNAAVPEAIPTPRAAASAALELPLGPAP) the composition is skewed to low complexity. In terms of domain architecture, SCAN box spans 108 to 166 (RQRFRQFRYQDAAGPREAFRQLRELSRQWLRPDIRTKEQIVEMLVQEQLLAILPEAARA).

Interacts with ZNF202.

It localises to the nucleus. Functionally, may regulate transcriptional activity. This Pan paniscus (Pygmy chimpanzee) protein is SCAN domain-containing protein 1 (SCAND1).